Consider the following 247-residue polypeptide: MAARRPGLIALFDVDGTLTAPRKVVTPEMLTFMQELRKVVTVGVVGGSDLIKISEQLGSTVTNDYDYVFSENGLVAHKEGKLIGTQSLKSFLGEEKLKEFINFTLHYIADLDIPIKRGTFIEFRSGMLNVSPIGRNCSQEERDEFEKYDKVHNIRPKMVSVLREKFAHLNLTFSIGGQISFDVFPQGWDKTYCLRYLDGFNEIHFFGDKTYKGGNDHEIYESERTVGHTVTSPDDTVKQCKSLFLEN.

Residue aspartate 13 is the Nucleophile of the active site. Positions 13 and 15 each coordinate Mg(2+). Catalysis depends on aspartate 15, which acts as the Proton donor/acceptor. 6 residues coordinate alpha-D-mannose 1-phosphate: arginine 22, arginine 124, arginine 135, arginine 142, serine 180, and aspartate 182. Positions 208, 220, and 225 each coordinate Mg(2+).

It belongs to the eukaryotic PMM family. In terms of assembly, homodimer. Requires Mg(2+) as cofactor.

The protein resides in the cytoplasm. The enzyme catalyses alpha-D-mannose 1-phosphate = D-mannose 6-phosphate. Its pathway is nucleotide-sugar biosynthesis; GDP-alpha-D-mannose biosynthesis; alpha-D-mannose 1-phosphate from D-fructose 6-phosphate: step 2/2. In terms of biological role, catalyzes the interconversion of mannose-6-phosphate to mannose-1-phosphate, the precursor for the synthesis of GDP-mannose. GDP-mannose is an essential sugar nucleotide for the synthesis of D-mannose-containing cell wall polysaccharides (galactomannans and glucomannans), glycolipids, glycoproteins and the antioxidant L-ascorbate. Can complement the yeast temperature-sensitive mutant sec53-6. This Glycine max (Soybean) protein is Phosphomannomutase.